The sequence spans 253 residues: rRNA adenine N-6-methyltransferase (253 aa).

Positions 14, 16, 40, 61, 85, and 101 each coordinate S-adenosyl-L-methionine. The disordered stretch occupies residues 229 to 253 (CAREESTPRPYLPDCTPTTGSISSR). The span at 244 to 253 (TPTTGSISSR) shows a compositional bias: polar residues.

The protein belongs to the class I-like SAM-binding methyltransferase superfamily. rRNA adenine N(6)-methyltransferase family.

Involved in erythromycin resistance. In Corynebacterium diphtheriae, this protein is rRNA adenine N-6-methyltransferase (ermA).